Reading from the N-terminus, the 448-residue chain is Argininosuccinate synthase (448 aa).

ATP is bound by residues 17–25 and alanine 43; that span reads AFSGGLDTS. Tyrosine 99 is a binding site for L-citrulline. ATP contacts are provided by glycine 129 and threonine 131. Positions 131, 135, and 136 each coordinate L-aspartate. Asparagine 135 is a binding site for L-citrulline. ATP is bound at residue aspartate 136. L-citrulline contacts are provided by arginine 139 and serine 192. Aspartate 194 contacts ATP. L-citrulline-binding residues include threonine 201, glutamate 203, and glutamate 280.

The protein belongs to the argininosuccinate synthase family. Type 2 subfamily. Homotetramer.

The protein resides in the cytoplasm. The enzyme catalyses L-citrulline + L-aspartate + ATP = 2-(N(omega)-L-arginino)succinate + AMP + diphosphate + H(+). Its pathway is amino-acid biosynthesis; L-arginine biosynthesis; L-arginine from L-ornithine and carbamoyl phosphate: step 2/3. This Pectobacterium carotovorum subsp. carotovorum (strain PC1) protein is Argininosuccinate synthase.